A 634-amino-acid chain; its full sequence is Growth hormone receptor (634 aa).

A signal peptide spans 1–18 (MDLWQLLLTLAVAGSSDA). The Extracellular portion of the chain corresponds to 19 to 260 (FSGSEATPAF…NPSACEEDFQ (242 aa)). The N-linked (GlcNAc...) asparagine glycan is linked to N46. A disulfide bridge connects residues C56 and C66. Residue N73 is glycosylated (N-linked (GlcNAc...) asparagine). C97 and C108 are disulfide-bonded. An N-linked (GlcNAc...) asparagine glycan is attached at N111. C122 and C136 are oxidised to a cystine. In terms of domain architecture, Fibronectin type-III spans 147–250 (PPVGLNWTLL…EVLLITFPQM (104 aa)). 3 N-linked (GlcNAc...) asparagine glycosylation sites follow: N152, N157, and N196. The WSXWS motif motif lies at 236–240 (YGKFS). A helical transmembrane segment spans residues 261–284 (FPWFLIIMFGILGLAVTLFLLIFS). Residues 285–634 (KQQRIKMLIL…STDQLNKIMP (350 aa)) lie on the Cytoplasmic side of the membrane. The interval 290–375 (KMLILPPVPV…HEKSLNIFGA (86 aa)) is required for JAK2 binding. The short motif at 293-301 (ILPPVPVPK) is the Box 1 motif element. The UbE motif motif lies at 336 to 345 (DSWVEFIELD). S337 is subject to Phosphoserine. A phosphotyrosine mark is found at Y483 and Y591.

It belongs to the type I cytokine receptor family. Type 1 subfamily. On growth hormone (GH) binding, forms homodimers and binds JAK2 via a box 1-containing domain. In terms of processing, the soluble form (GHBP) is produced by phorbol ester-promoted proteolytic cleavage at the cell surface (shedding) by ADAM17/TACE. Shedding is inhibited by growth hormone (GH) binding to the receptor probably due to a conformational change in GHR rendering the receptor inaccessible to ADAM17. On GH binding, phosphorylated on tyrosine residues in the cytoplasmic domain by JAK2. Post-translationally, ubiquitinated by the ECS(SOCS2) complex following ligand-binding and phosphorylation by JAK2, leading to its degradation by the proteasome. Regulation by the ECS(SOCS2) complex acts as a negative feedback loop of growth hormone receptor signaling. Ubiquitination is not sufficient for GHR internalization.

The protein localises to the cell membrane. The protein resides in the secreted. Its function is as follows. Receptor for pituitary gland growth hormone (GH1) involved in regulating postnatal body growth. On ligand binding, couples to the JAK2/STAT5 pathway. Functionally, the soluble form (GHBP) acts as a reservoir of growth hormone in plasma and may be a modulator/inhibitor of GH signaling. The chain is Growth hormone receptor (GHR) from Bos indicus (Zebu).